The primary structure comprises 1310 residues: Contactin-associated protein-like 4 (1310 aa).

Residues 1-27 (MNMGSVAGAVLKMLLLLSTQNWNRVEA) form the signal peptide. At 28-1243 (GNSYDCDEPL…LTHAIKSDSA (1216 aa)) the chain is on the extracellular side. The F5/8 type C domain maps to 33 to 179 (CDEPLVSALP…IGMRIEVFGC (147 aa)). A disulfide bond links C33 and C179. Residues 214-346 (FKTMESDGIL…NLFYNGVDVI (133 aa)) form the Laminin G-like 1 domain. N262, N287, and N361 each carry an N-linked (GlcNAc...) asparagine glycan. Disulfide bonds link C334–C366, C517–C549, C555–C566, and C560–C575. In terms of domain architecture, Laminin G-like 2 spans 400 to 529 (FRTWNKAGLL…LISINNKMVD (130 aa)). N540 is a glycosylation site (N-linked (GlcNAc...) asparagine). Residues 551–588 (ISDRCLPNSCEHGGECSQSWSTFHCNCTNTGYTGATCH) form the EGF-like 1 domain. N576 carries N-linked (GlcNAc...) asparagine glycosylation. C577 and C587 are oxidised to a cystine. A Fibrinogen C-terminal domain is found at 589–794 (SSVYEQSCEA…LLCRGDRPFW (206 aa)). N-linked (GlcNAc...) asparagine glycosylation is found at N604, N627, N639, N708, and N750. The region spanning 795-960 (NAASFNTEAS…TVTPGVQPGC (166 aa)) is the Laminin G-like 3 domain. Disulfide bonds link C933–C960, C964–C977, C971–C986, and C988–C998. The region spanning 960 to 999 (CRGHCGSYGKLCRHGGKCREKPSGFFCDCSSSAYAGPFCS) is the EGF-like 2 domain. N-linked (GlcNAc...) asparagine glycans are attached at residues N1019, N1025, and N1075. The Laminin G-like 4 domain maps to 1048–1204 (FRTTRAPSLL…VTGHVTESSC (157 aa)). Cysteines 1169 and 1204 form a disulfide. A helical membrane pass occupies residues 1244–1264 (VIGGLIAVVIFILLCVSAIAV). Over 1265-1310 (RIYQQKRLYKRNEAKRSENVDSAEAVLKSELHIQNAVGENQKEYFF) the chain is Cytoplasmic.

It belongs to the neurexin family. Interacts with TIAM1. In terms of tissue distribution, specifically present in developing cortical interneurons: highly expressed in cortical parvalbumin (PV) cells and midbrain dopaminergic neurons and is localized presynaptically (at protein level). Also present in the substantia nigra pars compacta (SnC) and ventral tegmental area (VTA) midbrain dopaminergic projection populations.

It localises to the presynaptic cell membrane. Its function is as follows. Presynaptic protein involved in both dopaminergic synaptic transmission and GABAergic system, thereby participating in the structural maturation of inhibitory interneuron synapses. Involved in the dopaminergic synaptic transmission by attenuating dopamine release through a presynaptic mechanism. Also participates in the GABAergic system. This chain is Contactin-associated protein-like 4 (Cntnap4), found in Mus musculus (Mouse).